Here is a 901-residue protein sequence, read N- to C-terminus: Protein translocase subunit SecA (901 aa).

ATP contacts are provided by residues glutamine 87, glycine 105–threonine 109, and aspartate 512. The segment at alanine 852–serine 901 is disordered. Cysteine 885, cysteine 887, cysteine 896, and histidine 897 together coordinate Zn(2+). A compositionally biased stretch (basic residues) spans lysine 891–serine 901.

Belongs to the SecA family. As to quaternary structure, monomer and homodimer. Part of the essential Sec protein translocation apparatus which comprises SecA, SecYEG and auxiliary proteins SecDF-YajC and YidC. Zn(2+) serves as cofactor.

Its subcellular location is the cell inner membrane. The protein resides in the cytoplasm. It carries out the reaction ATP + H2O + cellular proteinSide 1 = ADP + phosphate + cellular proteinSide 2.. Functionally, part of the Sec protein translocase complex. Interacts with the SecYEG preprotein conducting channel. Has a central role in coupling the hydrolysis of ATP to the transfer of proteins into and across the cell membrane, serving both as a receptor for the preprotein-SecB complex and as an ATP-driven molecular motor driving the stepwise translocation of polypeptide chains across the membrane. The polypeptide is Protein translocase subunit SecA (Citrobacter koseri (strain ATCC BAA-895 / CDC 4225-83 / SGSC4696)).